The following is a 487-amino-acid chain: Inosine-5'-monophosphate dehydrogenase (487 aa).

CBS domains are found at residues 93 to 152 (VVTE…VTAV) and 153 to 214 (MTPK…CKDE). Residues Asp-248, 248-250 (DSS), and 298-300 (GIG) each bind NAD(+). Gly-300 and Gly-302 together coordinate K(+). Residue Ser-303 coordinates IMP. Cys-305 lines the K(+) pocket. Cys-305 serves as the catalytic Thioimidate intermediate. IMP contacts are provided by residues 338-340 (DGG), 361-362 (GS), and 385-389 (YRGMG). Arg-401 serves as the catalytic Proton acceptor. Glu-415 is a binding site for IMP. K(+)-binding residues include Glu-469, Ser-470, and His-471.

It belongs to the IMPDH/GMPR family. As to quaternary structure, homotetramer. K(+) serves as cofactor.

The catalysed reaction is IMP + NAD(+) + H2O = XMP + NADH + H(+). Its pathway is purine metabolism; XMP biosynthesis via de novo pathway; XMP from IMP: step 1/1. Mycophenolic acid (MPA) is a non-competitive inhibitor that prevents formation of the closed enzyme conformation by binding to the same site as the amobile flap. In contrast, mizoribine monophosphate (MZP) is a competitive inhibitor that induces the closed conformation. MPA is a potent inhibitor of mammalian IMPDHs but a poor inhibitor of the bacterial enzymes. MZP is a more potent inhibitor of bacterial IMPDH. In terms of biological role, catalyzes the conversion of inosine 5'-phosphate (IMP) to xanthosine 5'-phosphate (XMP), the first committed and rate-limiting step in the de novo synthesis of guanine nucleotides, and therefore plays an important role in the regulation of cell growth. The sequence is that of Inosine-5'-monophosphate dehydrogenase from Yersinia pestis.